The following is a 322-amino-acid chain: MSELYDITIVGGGPVGLFAAFYAHLRQAKVKIIDSLPQLGGQPAILYPEKKILDVPGFTNLSGEELTQRLIEQLETFQTEICLNETVLDIVKSDDGFTITTSQAQHQTKTIIIAMGGGAFKPRALELDAAESYSNLHYHVSNISQYAGKKVVVLGGGDSAVDWALAFEKIAETSLVHRRDNFRALEHSVEELKASSVEIKTPFVPSRLVGENGKITHLEISQVKGEESQLLPLDHLFVNYGFKSSVGNLKDWGLELNRHKILVNSKQETSVPGIYAAGDCCSYEGKIDLIATGLGEAPTAVNNAINHIYPDQKVQPKHSTSL.

7 residues coordinate FAD: D34, Q42, Y47, V87, F120, D279, and T320.

This sequence belongs to the ferredoxin--NADP reductase type 2 family. As to quaternary structure, homodimer. The cofactor is FAD.

It carries out the reaction 2 reduced [2Fe-2S]-[ferredoxin] + NADP(+) + H(+) = 2 oxidized [2Fe-2S]-[ferredoxin] + NADPH. In Streptococcus sanguinis (strain SK36), this protein is Ferredoxin--NADP reductase.